Here is a 248-residue protein sequence, read N- to C-terminus: Triosephosphate isomerase (248 aa).

Asn-11 and Lys-13 together coordinate substrate. His-95 serves as the catalytic Electrophile. Glu-165 (proton acceptor) is an active-site residue.

The protein belongs to the triosephosphate isomerase family. Homodimer.

Its subcellular location is the cytoplasm. The catalysed reaction is dihydroxyacetone phosphate = methylglyoxal + phosphate. The enzyme catalyses D-glyceraldehyde 3-phosphate = dihydroxyacetone phosphate. It functions in the pathway carbohydrate degradation; glycolysis; D-glyceraldehyde 3-phosphate from glycerone phosphate: step 1/1. Its pathway is carbohydrate biosynthesis; gluconeogenesis. Triosephosphate isomerase is an extremely efficient metabolic enzyme that catalyzes the interconversion between dihydroxyacetone phosphate (DHAP) and D-glyceraldehyde-3-phosphate (G3P) in glycolysis and gluconeogenesis. In terms of biological role, it is also responsible for the non-negligible production of methylglyoxal a reactive cytotoxic side-product that modifies and can alter proteins, DNA and lipids. This Xenopus tropicalis (Western clawed frog) protein is Triosephosphate isomerase (tpi1).